Reading from the N-terminus, the 482-residue chain is UDP-glucose 6-dehydrogenase 2 (482 aa).

NAD(+)-binding positions include Gly8–Gly13, Asp33, Arg38, Val86–Thr90, Ser127–Thr128, and Glu163. Residues Glu159 to Glu163, Lys218 to Leu225, and Arg258 to Gly271 each bind substrate. Catalysis depends on Cys274, which acts as the Nucleophile. Cys274–Lys277 lines the NAD(+) pocket. Phe336–Lys337 contributes to the substrate binding site. Arg344 is a binding site for NAD(+). Residue Ser395 is modified to Phosphoserine. Arg449 lines the substrate pocket.

The protein belongs to the UDP-glucose/GDP-mannose dehydrogenase family.

It catalyses the reaction UDP-alpha-D-glucose + 2 NAD(+) + H2O = UDP-alpha-D-glucuronate + 2 NADH + 3 H(+). It participates in nucleotide-sugar biosynthesis; UDP-alpha-D-glucuronate biosynthesis; UDP-alpha-D-glucuronate from UDP-alpha-D-glucose: step 1/1. Involved in the biosynthesis of UDP-glucuronic acid (UDP-GlcA), providing nucleotide sugars for cell-wall polymers. This Oryza sativa subsp. japonica (Rice) protein is UDP-glucose 6-dehydrogenase 2 (UGD2).